The sequence spans 206 residues: MFATTLQGFTLGLAMIIPIGAQNAFVLSRGIHRNHHLLAATLCCLCDLILIGIGVFGGANLLAASPIGLALLTWGGVLFLCWFGIRSLRSAWQGQGAALADSPRLMGVKSVLAMTLGVTLLNPHVYLDTLMLLGSFGSQFAEPLRPAFAAGAMLASLVWFYSLAFGAAALSPWLARGRVQQAIDTIVGLIMLGLALQLASGALLAS.

6 helical membrane-spanning segments follow: residues 1-21 (MFAT…PIGA), 37-57 (LLAA…GVFG), 65-85 (SPIG…WFGI), 116-136 (LGVT…LGSF), 148-168 (FAAG…FGAA), and 185-205 (TIVG…ALLA).

This sequence belongs to the LysE/ArgO transporter (TC 2.A.75) family.

The protein localises to the cell membrane. The chain is Putative amino-acid transporter YggA (yggA) from Aeromonas salmonicida.